We begin with the raw amino-acid sequence, 404 residues long: Phosphoglycerate kinase (404 aa).

Residues 21–23 (DFN), R36, 59–62 (HLGR), R119, and R162 contribute to the substrate site. ATP contacts are provided by residues K213, G300, E331, and 360–363 (GGDS).

Belongs to the phosphoglycerate kinase family. Monomer.

It localises to the cytoplasm. It catalyses the reaction (2R)-3-phosphoglycerate + ATP = (2R)-3-phospho-glyceroyl phosphate + ADP. It participates in carbohydrate degradation; glycolysis; pyruvate from D-glyceraldehyde 3-phosphate: step 2/5. In Oenococcus oeni (strain ATCC BAA-331 / PSU-1), this protein is Phosphoglycerate kinase.